A 316-amino-acid polypeptide reads, in one-letter code: Ribosomal protein L11 methyltransferase (316 aa).

S-adenosyl-L-methionine-binding residues include T161, G182, D204, and N249.

It belongs to the methyltransferase superfamily. PrmA family.

Its subcellular location is the cytoplasm. The catalysed reaction is L-lysyl-[protein] + 3 S-adenosyl-L-methionine = N(6),N(6),N(6)-trimethyl-L-lysyl-[protein] + 3 S-adenosyl-L-homocysteine + 3 H(+). Its function is as follows. Methylates ribosomal protein L11. The chain is Ribosomal protein L11 methyltransferase from Ruminiclostridium cellulolyticum (strain ATCC 35319 / DSM 5812 / JCM 6584 / H10) (Clostridium cellulolyticum).